A 208-amino-acid chain; its full sequence is ATP-dependent Clp protease proteolytic subunit (208 aa).

Catalysis depends on S105, which acts as the Nucleophile. Residue H130 is part of the active site.

The protein belongs to the peptidase S14 family. Fourteen ClpP subunits assemble into 2 heptameric rings which stack back to back to give a disk-like structure with a central cavity, resembling the structure of eukaryotic proteasomes.

Its subcellular location is the cytoplasm. It carries out the reaction Hydrolysis of proteins to small peptides in the presence of ATP and magnesium. alpha-casein is the usual test substrate. In the absence of ATP, only oligopeptides shorter than five residues are hydrolyzed (such as succinyl-Leu-Tyr-|-NHMec, and Leu-Tyr-Leu-|-Tyr-Trp, in which cleavage of the -Tyr-|-Leu- and -Tyr-|-Trp bonds also occurs).. In terms of biological role, cleaves peptides in various proteins in a process that requires ATP hydrolysis. Has a chymotrypsin-like activity. Plays a major role in the degradation of misfolded proteins. This is ATP-dependent Clp protease proteolytic subunit from Xanthomonas axonopodis pv. citri (strain 306).